We begin with the raw amino-acid sequence, 129 residues long: Holo-[acyl-carrier-protein] synthase (129 aa).

Mg(2+) is bound by residues aspartate 8 and glutamate 60.

This sequence belongs to the P-Pant transferase superfamily. AcpS family. Mg(2+) is required as a cofactor.

It localises to the cytoplasm. The catalysed reaction is apo-[ACP] + CoA = holo-[ACP] + adenosine 3',5'-bisphosphate + H(+). Transfers the 4'-phosphopantetheine moiety from coenzyme A to a Ser of acyl-carrier-protein. The chain is Holo-[acyl-carrier-protein] synthase from Anaeromyxobacter sp. (strain Fw109-5).